We begin with the raw amino-acid sequence, 372 residues long: Rab9 effector protein with kelch motifs (372 aa).

5 Kelch repeats span residues 49-95 (KVFI…FLPS), 100-146 (SIWV…TSSA), 151-203 (HLYV…AAGT), 204-250 (KLFI…AAVA), and 254-303 (HVYV…VIPW). Residues 321-342 (LQDEKGDAAEKPETRSGGSREE) form a disordered region. Residues 322–342 (QDEKGDAAEKPETRSGGSREE) show a composition bias toward basic and acidic residues. The Kelch 6 repeat unit spans residues 349 to 372 (LCFVFGGMNTEGEIYDDCLVTVVD).

Interacts with PIKFYVE; the interaction recruits RABEPK to the endosomal membrane. Interacts with RAB9 in its GTP-bound conformation. Phosphorylated on Ser residues by PIKFYVE.

It is found in the cytoplasm. The protein localises to the endosome membrane. Its function is as follows. Rab9 effector required for endosome to trans-Golgi network (TGN) transport. This Rattus norvegicus (Rat) protein is Rab9 effector protein with kelch motifs (Rabepk).